A 60-amino-acid polypeptide reads, in one-letter code: Large ribosomal subunit protein bL32 (60 aa).

The protein belongs to the bacterial ribosomal protein bL32 family.

This Ruminiclostridium cellulolyticum (strain ATCC 35319 / DSM 5812 / JCM 6584 / H10) (Clostridium cellulolyticum) protein is Large ribosomal subunit protein bL32.